The primary structure comprises 492 residues: Cytoplasmic dynein 1 light intermediate chain 2 (492 aa).

ATP is bound at residue G61–T68. Disordered regions lie at residues E188 to E207, L370 to A423, and L437 to A492. Phosphoserine is present on residues S194, S383, and S391. Polar residues predominate over residues L370–S383. R397 is subject to Omega-N-methylarginine. Residues L437–Q469 show a composition bias toward polar residues. A Phosphothreonine modification is found at T441. Phosphoserine is present on residues S443 and S446. Over residues E471–D480 the composition is skewed to basic and acidic residues. Residues M482–A492 show a composition bias toward polar residues.

Belongs to the dynein light intermediate chain family. Homodimer. The cytoplasmic dynein 1 complex consists of two catalytic heavy chains (HCs) and a number of non-catalytic subunits presented by intermediate chains (ICs), light intermediate chains (LICs) and light chains (LCs); the composition seems to vary in respect to the IC, LIC and LC composition. The heavy chain homodimer serves as a scaffold for the probable homodimeric assembly of the respective non-catalytic subunits. The ICs and LICs bind directly to the HC dimer and the LCs assemble on the IC dimer. Interacts with DYNC1H1; DYNC1LI1 and DYNC1LI2 bind mutually exclusive to DYNC1H.

It is found in the cytoplasm. It localises to the cytoskeleton. Its function is as follows. Acts as one of several non-catalytic accessory components of the cytoplasmic dynein 1 complex that are thought to be involved in linking dynein to cargos and to adapter proteins that regulate dynein function. Cytoplasmic dynein 1 acts as a motor for the intracellular retrograde motility of vesicles and organelles along microtubules. May play a role in binding dynein to membranous organelles or chromosomes. The polypeptide is Cytoplasmic dynein 1 light intermediate chain 2 (Dync1li2) (Mus musculus (Mouse)).